A 622-amino-acid polypeptide reads, in one-letter code: Chaperone protein HscA homolog (622 aa).

The protein belongs to the heat shock protein 70 family.

Functionally, chaperone involved in the maturation of iron-sulfur cluster-containing proteins. Has a low intrinsic ATPase activity which is markedly stimulated by HscB. The polypeptide is Chaperone protein HscA homolog (Burkholderia multivorans (strain ATCC 17616 / 249)).